A 283-amino-acid chain; its full sequence is uncharacterized protein (283 aa).

The next 5 helical transmembrane spans lie at 8-28, 38-58, 73-93, 100-120, and 175-195; these read LILS…IGYV, GIHS…VKIA, FECL…YEIG, IIYG…ILSI, and AIAG…ICLT.

The protein belongs to the cation diffusion facilitator (CDF) transporter (TC 2.A.4) family.

Its subcellular location is the cell membrane. This is an uncharacterized protein from Methanocaldococcus jannaschii (strain ATCC 43067 / DSM 2661 / JAL-1 / JCM 10045 / NBRC 100440) (Methanococcus jannaschii).